Reading from the N-terminus, the 82-residue chain is RNA-binding protein Hfq (82 aa).

In terms of domain architecture, Sm spans 10–69 (DPFLNALRREHVPVSIYLVNGIKLQGQIESFDQYVVLLRNTVTQMVYKHAISTIVPGRAV).

This sequence belongs to the Hfq family. As to quaternary structure, homohexamer.

RNA chaperone that binds small regulatory RNA (sRNAs) and mRNAs to facilitate mRNA translational regulation in response to envelope stress, environmental stress and changes in metabolite concentrations. Also binds with high specificity to tRNAs. This chain is RNA-binding protein Hfq, found in Albidiferax ferrireducens (strain ATCC BAA-621 / DSM 15236 / T118) (Rhodoferax ferrireducens).